Consider the following 29-residue polypeptide: Conotoxin SIVC (29 aa).

At A1 the chain carries N-acetylalanine; partial. Position 2 is a 4-hydroxyproline (P2). Residues T7 and T9 are each glycosylated (O-linked (HexNAc...) threonine). Residues P18 and P22 each carry the 4-hydroxyproline modification. Position 29 is a cysteine amide (C29).

It belongs to the conotoxin A superfamily. In terms of processing, O-linked glycans consist of Hex4-HexNAc2 hexasaccharides. N-terminus is found to be free and N-acetylated, depending on the fraction studied. Post-translationally, contains 3 disulfide bonds. Expressed by the venom duct. Low expression in the distal venom duct sections.

It localises to the secreted. Its function is as follows. Probable neurotoxin with ion channel inhibitor activity. The sequence is that of Conotoxin SIVC from Conus striatus (Striated cone).